The sequence spans 98 residues: uncharacterized protein (98 aa).

Residues 10-30 traverse the membrane as a helical segment; it reads LYGFFAVTGVLIASFIIGEIV.

The protein resides in the host membrane. This is an uncharacterized protein from Saccharolobus islandicus (Sulfolobus islandicus).